The sequence spans 243 residues: UPF0246 protein SEQ_2141 (243 aa).

The protein belongs to the UPF0246 family.

The chain is UPF0246 protein SEQ_2141 from Streptococcus equi subsp. equi (strain 4047).